A 631-amino-acid polypeptide reads, in one-letter code: Phosphomethylpyrimidine synthase (631 aa).

Residues Asn239, Met268, Tyr297, His333, 353-355 (SRG), 394-397 (DGLR), and Glu433 each bind substrate. Residue His437 participates in Zn(2+) binding. Residue Tyr460 participates in substrate binding. His501 contacts Zn(2+). 3 residues coordinate [4Fe-4S] cluster: Cys581, Cys584, and Cys589.

It belongs to the ThiC family. As to quaternary structure, homodimer. [4Fe-4S] cluster is required as a cofactor.

It catalyses the reaction 5-amino-1-(5-phospho-beta-D-ribosyl)imidazole + S-adenosyl-L-methionine = 4-amino-2-methyl-5-(phosphooxymethyl)pyrimidine + CO + 5'-deoxyadenosine + formate + L-methionine + 3 H(+). Its pathway is cofactor biosynthesis; thiamine diphosphate biosynthesis. Catalyzes the synthesis of the hydroxymethylpyrimidine phosphate (HMP-P) moiety of thiamine from aminoimidazole ribotide (AIR) in a radical S-adenosyl-L-methionine (SAM)-dependent reaction. The polypeptide is Phosphomethylpyrimidine synthase (Shigella sonnei (strain Ss046)).